We begin with the raw amino-acid sequence, 433 residues long: Nuclear hormone receptor family member nhr-98 (433 aa).

The segment at residues 41–116 (SKKCQICENP…FGMTIDNFQF (76 aa)) is a DNA-binding region (nuclear receptor). 2 NR C4-type zinc fingers span residues 44-64 (CQIC…CRAC) and 80-104 (CKTE…MQRC). In terms of domain architecture, NR LBD spans 177–433 (ETPYQVSNVL…CSHPGIFLNA (257 aa)).

The protein belongs to the nuclear hormone receptor family.

It localises to the nucleus. In terms of biological role, orphan nuclear receptor. In Caenorhabditis elegans, this protein is Nuclear hormone receptor family member nhr-98 (nhr-98).